The chain runs to 292 residues: Feruloyl esterase B (292 aa).

Positions 1–18 (MLPRTLLGLALTAATGLC) are cleaved as a signal peptide. 4 N-linked (GlcNAc...) asparagine glycosylation sites follow: N88, N117, N179, and N245.

Belongs to the carbohydrate esterase 1 (CE1) family. Feruloyl esterase type B subfamily.

Its subcellular location is the secreted. It carries out the reaction feruloyl-polysaccharide + H2O = ferulate + polysaccharide.. In terms of biological role, involved in degradation of plant cell walls. Hydrolyzes of the feruloyl-arabinose ester bond in arabinoxylans as well as the feruloyl-galactose and feruloyl-arabinose ester bonds in pectin. The chain is Feruloyl esterase B (fae-1) from Neurospora crassa (strain ATCC 24698 / 74-OR23-1A / CBS 708.71 / DSM 1257 / FGSC 987).